Consider the following 213-residue polypeptide: ATP-dependent Clp protease proteolytic subunit (213 aa).

S114 functions as the Nucleophile in the catalytic mechanism. The active site involves H139.

It belongs to the peptidase S14 family. Fourteen ClpP subunits assemble into 2 heptameric rings which stack back to back to give a disk-like structure with a central cavity, resembling the structure of eukaryotic proteasomes.

The protein localises to the cytoplasm. The catalysed reaction is Hydrolysis of proteins to small peptides in the presence of ATP and magnesium. alpha-casein is the usual test substrate. In the absence of ATP, only oligopeptides shorter than five residues are hydrolyzed (such as succinyl-Leu-Tyr-|-NHMec, and Leu-Tyr-Leu-|-Tyr-Trp, in which cleavage of the -Tyr-|-Leu- and -Tyr-|-Trp bonds also occurs).. Cleaves peptides in various proteins in a process that requires ATP hydrolysis. Has a chymotrypsin-like activity. Plays a major role in the degradation of misfolded proteins. The polypeptide is ATP-dependent Clp protease proteolytic subunit (Pseudomonas syringae pv. syringae (strain B728a)).